The following is a 186-amino-acid chain: Crossover junction endodeoxyribonuclease RuvC (186 aa).

Catalysis depends on residues D14, E73, and D145. Mg(2+)-binding residues include D14, E73, and D145. The tract at residues 162–186 is disordered; it reads GRSLPPSRGRRRSGSRQRWRDYRPS. A compositionally biased stretch (basic residues) spans 169–178; the sequence is RGRRRSGSRQ.

The protein belongs to the RuvC family. Homodimer which binds Holliday junction (HJ) DNA. The HJ becomes 2-fold symmetrical on binding to RuvC with unstacked arms; it has a different conformation from HJ DNA in complex with RuvA. In the full resolvosome a probable DNA-RuvA(4)-RuvB(12)-RuvC(2) complex forms which resolves the HJ. Mg(2+) serves as cofactor.

The protein localises to the cytoplasm. The catalysed reaction is Endonucleolytic cleavage at a junction such as a reciprocal single-stranded crossover between two homologous DNA duplexes (Holliday junction).. Its function is as follows. The RuvA-RuvB-RuvC complex processes Holliday junction (HJ) DNA during genetic recombination and DNA repair. Endonuclease that resolves HJ intermediates. Cleaves cruciform DNA by making single-stranded nicks across the HJ at symmetrical positions within the homologous arms, yielding a 5'-phosphate and a 3'-hydroxyl group; requires a central core of homology in the junction. The consensus cleavage sequence is 5'-(A/T)TT(C/G)-3'. Cleavage occurs on the 3'-side of the TT dinucleotide at the point of strand exchange. HJ branch migration catalyzed by RuvA-RuvB allows RuvC to scan DNA until it finds its consensus sequence, where it cleaves and resolves the cruciform DNA. The protein is Crossover junction endodeoxyribonuclease RuvC of Chromohalobacter salexigens (strain ATCC BAA-138 / DSM 3043 / CIP 106854 / NCIMB 13768 / 1H11).